The following is a 329-amino-acid chain: Protein STRICTOSIDINE SYNTHASE-LIKE 11 (329 aa).

An N-terminal signal peptide occupies residues 1–23; the sequence is MMRSFVSLISLLLLLSFSSSVLS. Residues Asn-37 and Asn-79 are each glycosylated (N-linked (GlcNAc...) asparagine).

This sequence belongs to the strictosidine synthase family.

Its subcellular location is the vacuole. It carries out the reaction 3alpha(S)-strictosidine + H2O = secologanin + tryptamine. The protein operates within alkaloid biosynthesis; 3alpha(S)-strictosidine biosynthesis; 3alpha(S)-strictosidine from secologanin and tryptamine: step 1/1. Functionally, catalyzes the stereospecific condensation of tryptamine with secologanin to form strictosidine, the key intermediate of indole alkaloid biosynthesis. The protein is Protein STRICTOSIDINE SYNTHASE-LIKE 11 of Arabidopsis thaliana (Mouse-ear cress).